The primary structure comprises 416 residues: Nuclear hormone receptor family member nhr-67 (416 aa).

The nuclear receptor DNA-binding region spans 18 to 98 (DVDCRVCEDH…IGMNKDAVQH (81 aa)). NR C4-type zinc fingers lie at residues 21 to 41 (CRVC…CDGC) and 57 to 86 (CKNK…LRKC). Residues 331–398 (KTETEEGEDI…SSRPRHSIRS (68 aa)) are disordered. Positions 335–346 (EEGEDIEEEDDA) are enriched in acidic residues. Low complexity predominate over residues 377 to 390 (SSTQPSSASSPSSS).

It belongs to the nuclear hormone receptor family. Expressed in linker cell.

Its subcellular location is the nucleus. Orphan nuclear receptor that binds DNA containing an extended core motif half-site sequence 5'-AAGTCA-3'. In males, plays an essential role in the migration of the linker cell which guides gonad elongation during the L3 and L4 stages of larval development by negatively regulating the expression of netrin receptor unc-5 at the mid-L3 stage. Involved in the regulation of non-apoptotic cell death in the linker cell, acting upstream of or in parallel to transcription factor hsf-1. Represses hypoxia response genes, fmo-2 and acs-2, in both normoxic and hypoxic conditions, probably acting via repression of nuclear receptor nhr-49. This Caenorhabditis elegans protein is Nuclear hormone receptor family member nhr-67 (nhr-67).